Consider the following 190-residue polypeptide: Ras-related protein RabF1 (190 aa).

GTP is bound at residue 15 to 22; that stretch reads GDSGVGKT. The Effector region motif lies at 37-44; sequence HITIGIEF. GTP is bound by residues 62-66 and 119-122; these read DTAGE and NKND. Cys-187 carries the cysteine methyl ester modification. The S-geranylgeranyl cysteine moiety is linked to residue Cys-187. The propeptide at 188–190 is removed in mature form; the sequence is IIN.

The protein belongs to the small GTPase superfamily. Rab family.

It localises to the cell membrane. This chain is Ras-related protein RabF1 (rabF1-1), found in Dictyostelium discoideum (Social amoeba).